The following is a 142-amino-acid chain: MLEKTLSILKPDVIKRNITGQVNSYIENSGLKIIIQKMCLLTRCQAEEFYAIHKSQHFFVPLIDFMVSGPIIVQVLQGENAISLYREIMGATDPKKASPGTIRADFAENIDANCVHGSDSLDNAMREIRFFFSDYELLALNG.

ATP contacts are provided by lysine 10, phenylalanine 58, arginine 86, threonine 92, arginine 103, and asparagine 113. Residue histidine 116 is the Pros-phosphohistidine intermediate of the active site.

It belongs to the NDK family. In terms of assembly, homotetramer. Mg(2+) is required as a cofactor.

The protein resides in the cytoplasm. It carries out the reaction a 2'-deoxyribonucleoside 5'-diphosphate + ATP = a 2'-deoxyribonucleoside 5'-triphosphate + ADP. The enzyme catalyses a ribonucleoside 5'-diphosphate + ATP = a ribonucleoside 5'-triphosphate + ADP. In terms of biological role, major role in the synthesis of nucleoside triphosphates other than ATP. The ATP gamma phosphate is transferred to the NDP beta phosphate via a ping-pong mechanism, using a phosphorylated active-site intermediate. The sequence is that of Nucleoside diphosphate kinase from Ehrlichia chaffeensis (strain ATCC CRL-10679 / Arkansas).